A 660-amino-acid chain; its full sequence is Bifunctional polymyxin resistance protein ArnA (660 aa).

A formyltransferase ArnAFT region spans residues 1 to 304 (MKTVVFAYHD…TLGLVQGSRL (304 aa)). 86–88 (HLI) is a binding site for (6R)-10-formyltetrahydrofolate. His-104 serves as the catalytic Proton donor; for formyltransferase activity. (6R)-10-formyltetrahydrofolate-binding positions include Arg-114 and 136–140 (VKRAD). The segment at 314–660 (RRTRVLILGV…RTVDLTDKPS (347 aa)) is dehydrogenase ArnADH. Residues Asp-347 and 368-369 (DI) each bind NAD(+). UDP-alpha-D-glucuronate is bound by residues Ala-393, Tyr-398, and 432-433 (TS). Glu-434 acts as the Proton acceptor; for decarboxylase activity in catalysis. UDP-alpha-D-glucuronate-binding positions include Arg-460, Asn-492, 526-535 (KLIDGGKQKR), and Tyr-613. Residue Arg-619 is the Proton donor; for decarboxylase activity of the active site.

In the N-terminal section; belongs to the Fmt family. UDP-L-Ara4N formyltransferase subfamily. It in the C-terminal section; belongs to the NAD(P)-dependent epimerase/dehydratase family. UDP-glucuronic acid decarboxylase subfamily. As to quaternary structure, homohexamer, formed by a dimer of trimers.

The enzyme catalyses UDP-alpha-D-glucuronate + NAD(+) = UDP-beta-L-threo-pentopyranos-4-ulose + CO2 + NADH. The catalysed reaction is UDP-4-amino-4-deoxy-beta-L-arabinose + (6R)-10-formyltetrahydrofolate = UDP-4-deoxy-4-formamido-beta-L-arabinose + (6S)-5,6,7,8-tetrahydrofolate + H(+). Its pathway is nucleotide-sugar biosynthesis; UDP-4-deoxy-4-formamido-beta-L-arabinose biosynthesis; UDP-4-deoxy-4-formamido-beta-L-arabinose from UDP-alpha-D-glucuronate: step 1/3. It functions in the pathway nucleotide-sugar biosynthesis; UDP-4-deoxy-4-formamido-beta-L-arabinose biosynthesis; UDP-4-deoxy-4-formamido-beta-L-arabinose from UDP-alpha-D-glucuronate: step 3/3. It participates in bacterial outer membrane biogenesis; lipopolysaccharide biosynthesis. Bifunctional enzyme that catalyzes the oxidative decarboxylation of UDP-glucuronic acid (UDP-GlcUA) to UDP-4-keto-arabinose (UDP-Ara4O) and the addition of a formyl group to UDP-4-amino-4-deoxy-L-arabinose (UDP-L-Ara4N) to form UDP-L-4-formamido-arabinose (UDP-L-Ara4FN). The modified arabinose is attached to lipid A and is required for resistance to polymyxin and cationic antimicrobial peptides. This Escherichia coli O157:H7 protein is Bifunctional polymyxin resistance protein ArnA.